A 588-amino-acid chain; its full sequence is WD repeat-containing protein DDB_G0349043 (588 aa).

The disordered stretch occupies residues 1-32; the sequence is MPLDNKVQLNENGKEVNNNNNNDEDLKIQDNH. Positions 40-72 constitute a LisH domain; the sequence is NRSELVRLLIQSLNSLGYDKSAEFLEKDSGISL. In terms of domain architecture, CTLH spans 73–129; it reads QSKEINQFSECVVSGDWNKVEELLPFLKLNEFDTNNVKFLVYSQKFLEYLENHKIKE. WD repeat units lie at residues 244-283, 294-333, and 336-375; these read KHRD…LDQP, GHTK…LLKT, and KHSD…LTNS. A disordered region spans residues 376–403; the sequence is NNNNNNHNNNNSNINGNSINGSNNNGNN. WD repeat units lie at residues 413–452, 455–494, 499–539, and 542–582; these read WACA…TPEV, METD…IVQK, KQGR…LLET, and RHSG…NSFI.

The chain is WD repeat-containing protein DDB_G0349043 from Dictyostelium discoideum (Social amoeba).